We begin with the raw amino-acid sequence, 132 residues long: Small ribosomal subunit protein uS8 (132 aa).

Belongs to the universal ribosomal protein uS8 family. In terms of assembly, part of the 30S ribosomal subunit. Contacts proteins S5 and S12.

Functionally, one of the primary rRNA binding proteins, it binds directly to 16S rRNA central domain where it helps coordinate assembly of the platform of the 30S subunit. The chain is Small ribosomal subunit protein uS8 from Bacillus licheniformis (strain ATCC 14580 / DSM 13 / JCM 2505 / CCUG 7422 / NBRC 12200 / NCIMB 9375 / NCTC 10341 / NRRL NRS-1264 / Gibson 46).